A 211-amino-acid polypeptide reads, in one-letter code: Large ribosomal subunit protein mL48 (211 aa).

Residues 1–27 constitute a mitochondrion transit peptide; it reads MSGTLGKVLGVWTNTVSKQGFSLLRFR. K198 bears the N6-succinyllysine mark.

This sequence belongs to the mitochondrion-specific ribosomal protein mL48 family. Component of the mitochondrial ribosome large subunit (39S) which comprises a 16S rRNA and about 50 distinct proteins. Interacts with OXA1L.

The protein localises to the mitochondrion. This is Large ribosomal subunit protein mL48 (Mrpl48) from Mus musculus (Mouse).